We begin with the raw amino-acid sequence, 179 residues long: Cytoglobin-2 (179 aa).

Residues 1-11 are compositionally biased toward acidic residues; it reads MEKEREDEETE. Positions 1 to 20 are disordered; sequence MEKEREDEETEGRERPEPLT. A Globin domain is found at 18 to 167; sequence PLTDVERGII…LYWHITGAYT (150 aa). Residues His81 and His113 each contribute to the heme b site.

Belongs to the globin family. Monomeric. In terms of tissue distribution, expressed in all tissues examined, with highest levels in brain and eye, and considerably lower levels in skin, gut, heart, gill, liver and muscle.

The protein localises to the cytoplasm. The protein resides in the nucleus. It carries out the reaction Fe(II)-heme b-[protein] + nitric oxide + O2 = Fe(III)-heme b-[protein] + nitrate. It catalyses the reaction Fe(III)-heme b-[protein] + nitric oxide + H2O = Fe(II)-heme b-[protein] + nitrite + 2 H(+). The catalysed reaction is 2 superoxide + 2 H(+) = H2O2 + O2. The enzyme catalyses H2O2 + AH2 = A + 2 H2O. In terms of biological role, probable multifunctional globin with a hexacoordinated heme iron required for the catalysis of various reactions depending on redox condition of the cell as well as oxygen availability. Has a nitric oxide dioxygenase (NOD) activity and is most probably involved in cell-mediated and oxygen-dependent nitric oxide consumption. Under normoxic conditions functions as a nitric oxide dioxygenase (NOD) but under hypoxic conditions the globin may switch its function to that of a nitrite (NO2) reductase (NiR), generating nitric oxide. Could also have peroxidase and superoxide dismutase activities, detoxifying reactive oxygen species and protecting cells against oxidative stress. Also binds dioxygen with low affinity and could function as an oxygen sensor but has probably no function as a respiratory oxygen carrier. The chain is Cytoglobin-2 from Danio rerio (Zebrafish).